Here is a 34-residue protein sequence, read N- to C-terminus: Thermomycolin (34 aa).

Serine 33 functions as the Charge relay system in the catalytic mechanism.

Belongs to the peptidase S8 family.

Its subcellular location is the secreted. It catalyses the reaction Rather non-specific hydrolysis of proteins. Preferential cleavage: -Ala-|-Xaa-, -Tyr-|-Xaa-, -Phe-|-Xaa- in small molecular substrates.. Functionally, this is an extracellular proteinase with a general specificity for apolar residues. This Malbranchea cinnamomea (Thermophilic fungus) protein is Thermomycolin.